The primary structure comprises 64 residues: Large ribosomal subunit protein bL35 (64 aa).

The protein belongs to the bacterial ribosomal protein bL35 family.

This chain is Large ribosomal subunit protein bL35, found in Alcanivorax borkumensis (strain ATCC 700651 / DSM 11573 / NCIMB 13689 / SK2).